The primary structure comprises 334 residues: tRNA-dihydrouridine(20/20a) synthase (334 aa).

Residues 18–20 (PMM) and Gln-71 each bind FMN. The Proton donor role is filled by Cys-101. FMN is bound by residues Lys-140, His-172, 212-214 (NGG), and 234-235 (GR).

This sequence belongs to the Dus family. DusA subfamily. Requires FMN as cofactor.

The catalysed reaction is 5,6-dihydrouridine(20) in tRNA + NADP(+) = uridine(20) in tRNA + NADPH + H(+). The enzyme catalyses 5,6-dihydrouridine(20) in tRNA + NAD(+) = uridine(20) in tRNA + NADH + H(+). It carries out the reaction 5,6-dihydrouridine(20a) in tRNA + NADP(+) = uridine(20a) in tRNA + NADPH + H(+). It catalyses the reaction 5,6-dihydrouridine(20a) in tRNA + NAD(+) = uridine(20a) in tRNA + NADH + H(+). Its function is as follows. Catalyzes the synthesis of 5,6-dihydrouridine (D), a modified base found in the D-loop of most tRNAs, via the reduction of the C5-C6 double bond in target uridines. Specifically modifies U20 and U20a in tRNAs. In Xanthomonas axonopodis pv. citri (strain 306), this protein is tRNA-dihydrouridine(20/20a) synthase.